The primary structure comprises 360 residues: MIIWLAELLQPYFSFFRLFEYLSFRAILSVLTALGLSLWMGPRLIKRLQLLQIGQVVRNEGPESHFSKRGTPTMGGVMILAAISITILLWANLSNPYVWAVLAVLMGYGAVGFVDDYRKVVRKNTDGLIARWKYFWQSAIALVVAFALYAYGKDTAATQLVVPFFKDVMPQLGLMYIVLTYFVIVGTSNAVNLTDGLDGLAIMPTVLVAAGFAVIAWATGNVNFSQYLHIPYLPHASELVVVCTAIVGAGLGFLWFNTYPAQVFMGDVGSLALGGALGTIAVLVRQELVLVIMGGVFVMETLSVILQVGSYKLRGQRIFRMAPIHHHYELKGWPEPRVIVRFWIISMVLVLIGLATLKVR.

Helical transmembrane passes span 21-41 (YLSF…LWMG), 73-93 (TMGG…WANL), 94-114 (SNPY…VGFV), 132-152 (WKYF…YAYG), 168-188 (VMPQ…VGTS), 199-219 (GLAI…AWAT), 236-256 (ASEL…FLWF), 263-283 (VFMG…IAVL), 288-308 (LVLV…ILQV), and 338-358 (VIVR…ATLK).

It belongs to the glycosyltransferase 4 family. MraY subfamily. The cofactor is Mg(2+).

Its subcellular location is the cell inner membrane. It carries out the reaction UDP-N-acetyl-alpha-D-muramoyl-L-alanyl-gamma-D-glutamyl-meso-2,6-diaminopimeloyl-D-alanyl-D-alanine + di-trans,octa-cis-undecaprenyl phosphate = di-trans,octa-cis-undecaprenyl diphospho-N-acetyl-alpha-D-muramoyl-L-alanyl-D-glutamyl-meso-2,6-diaminopimeloyl-D-alanyl-D-alanine + UMP. It participates in cell wall biogenesis; peptidoglycan biosynthesis. Its function is as follows. Catalyzes the initial step of the lipid cycle reactions in the biosynthesis of the cell wall peptidoglycan: transfers peptidoglycan precursor phospho-MurNAc-pentapeptide from UDP-MurNAc-pentapeptide onto the lipid carrier undecaprenyl phosphate, yielding undecaprenyl-pyrophosphoryl-MurNAc-pentapeptide, known as lipid I. This Vibrio vulnificus (strain YJ016) protein is Phospho-N-acetylmuramoyl-pentapeptide-transferase.